The following is a 1399-amino-acid chain: MNQEIMNLFNPTTPAQVFDQIRISIASPEKILSWSYGEIKKPETINYRTFKPERDGLFCARIFGPIKDYECLCGKYKRMKYKGIICEKCSVEVTLSRVRRERMGHIELAAPVAHIWFLKSLPSRIGLLLDMTLKDLERILYFEYYVVLEPGLTALKDRQLLSEEEYLKAQDEYGQDSFTAMIGAEAIRELLRGLDLEKLEAQLRADMAETDSDIKHKKFAKRLKIVEAFRNSGNKPEWMIMTVVPVIPPDLRPLVPLDGGRFATSDLNDLYRRVINRNNRLKRLMELRAPDIIIRNEKRMLQEAVDALFDNGRRGRVITGANKRPLKSLADMLKGKQGRFRQNLLGKRVDYSGRSVIVVGPELKLHQCGLPKKMALELFKPFIYSRLDAKGLSTTVKQAKKLVEKERPEVWDILDEVIREHPVLLNRAPTLHRLGIQAFEPTLIEGKAIQLHPLVCAAFNADFDGDQMAVHVPLSLEAQLEARVLMMSTNNILHPANGQPIIVPSQDIVLGLYYLSIMREGLAGEGKVYGEMAEIEHALYSKVIHLHTKIKYRWHGVGEDGKPVTKWYETTAGRVMLGQVLPNHPKIPFDAINKLMTKREISGVIDQVYRHCGQKETVIFCDRIMALGFHNAFKAGISFGKDDMVVPQGKWKVVDDTRSMAKEFEQQYNDGLITQGEKYNKVVDAWSKATEKIADEMMKEISSVKKTTKGNEAQINSIYMMAHSGARGSPAQMRQLAGMRGLMAKPSGEIIETPIISNFKEGLSVLEYFNSTHGARKGLADTALKTANSGYLTRRLVDVAQDCIINASDCGTNLGIKMRAIVDAGTVVASLGSRILGRTACEDIREPSTNNVIVPRGTLMEESHVDAIQRAGVQEVKIRSALTCELVNGICAMCYGRDLARGTPVNHGEAVGVIAAQSIGEPGTQLTMRTFHIGGAAQINEQSFVESNFDGKVTIRNRGIATNSEGASVAMVRNMVVAIVDADGTERVTHRVQYGARMRVDEGDTIKRGQRIAEWDPYTRPILTEVEGTIGFEDLVEGQSISETLDESTGIAKRVVIDWRSTGRGADLRPAIVVKGKDGKVLKLQRGGDARYMLSVDAILSVDIGSQVKPGDILARISTESAKTRDITGGLPRVAELFEARRPKDAAIIAETAGTIRFGRDYKNKRRISIEPTDKTEEPREYLIPKGKHIHLQDGDIVEKGDFIVEGNPAPHDILAIKGIEELAAYLVNEIQEVYRLQGVLINDKHIEVIVRQMLQKVEVTDQGDTDMISGEQVDKIEFDQNNDKAKEEGKKPATGTPVLLGITKASLQTRSFFSAASFQETTRVLTEAAVNGKVDPLEGLKENVIVGRLIPAGTGASMAKIREVAMKRDKLIQDEREKQAAITPAAPEAEPLALPPAE.

Residues Cys71, Cys73, Cys86, and Cys89 each contribute to the Zn(2+) site. Positions 462, 464, and 466 each coordinate Mg(2+). Cys810, Cys884, Cys891, and Cys894 together coordinate Zn(2+). The segment at 1376 to 1399 (EREKQAAITPAAPEAEPLALPPAE) is disordered.

It belongs to the RNA polymerase beta' chain family. As to quaternary structure, the RNAP catalytic core consists of 2 alpha, 1 beta, 1 beta' and 1 omega subunit. When a sigma factor is associated with the core the holoenzyme is formed, which can initiate transcription. Mg(2+) is required as a cofactor. It depends on Zn(2+) as a cofactor.

The enzyme catalyses RNA(n) + a ribonucleoside 5'-triphosphate = RNA(n+1) + diphosphate. DNA-dependent RNA polymerase catalyzes the transcription of DNA into RNA using the four ribonucleoside triphosphates as substrates. In Afipia carboxidovorans (strain ATCC 49405 / DSM 1227 / KCTC 32145 / OM5) (Oligotropha carboxidovorans), this protein is DNA-directed RNA polymerase subunit beta'.